A 211-amino-acid polypeptide reads, in one-letter code: Heat shock 70 kDa protein 4L (211 aa).

Ser161 carries the phosphoserine modification.

The protein belongs to the heat shock protein 70 family. In terms of assembly, homodimer.

Its subcellular location is the cytoplasm. It is found in the nucleus. Its function is as follows. Possesses chaperone activity in vitro where it inhibits aggregation of citrate synthase. This Mesocricetus auratus (Golden hamster) protein is Heat shock 70 kDa protein 4L.